A 277-amino-acid chain; its full sequence is Endochitinase CHI (277 aa).

The N-terminal stretch at 1–31 (MAKPTSRNDRFALFFITLIFLILTVSKPVAS) is a signal peptide. Residues 32 to 66 (QNCGCASDFCCSKYGYCGTTDEFCGEGCQAGPCRS) form the Chitin-binding type-1 domain. Intrachain disulfides connect cysteine 34–cysteine 42, cysteine 36–cysteine 48, cysteine 41–cysteine 55, and cysteine 59–cysteine 64. The tract at residues 75–277 (VSLEGTVTPD…GVAPGDNLTC (203 aa)) is catalytic. Glutamate 136 serves as the catalytic Proton donor. The N-linked (GlcNAc...) asparagine glycan is linked to asparagine 274.

This sequence belongs to the glycosyl hydrolase 19 family. Chitinase class I subfamily.

It carries out the reaction Random endo-hydrolysis of N-acetyl-beta-D-glucosaminide (1-&gt;4)-beta-linkages in chitin and chitodextrins.. This Arabidopsis thaliana (Mouse-ear cress) protein is Endochitinase CHI.